The sequence spans 255 residues: 3-alpha-(or 20-beta)-hydroxysteroid dehydrogenase (255 aa).

10 to 34 (IITGGARGLGAEAARQAVAAGARVV) provides a ligand contact to NAD(+). Ser-139 is a substrate binding site. Tyr-152 (proton acceptor) is an active-site residue.

This sequence belongs to the short-chain dehydrogenases/reductases (SDR) family. As to quaternary structure, homotetramer.

The enzyme catalyses androstan-3alpha,17beta-diol + NAD(+) = 17beta-hydroxyandrostanone + NADH + H(+). It participates in lipid metabolism; C21-steroid hormone metabolism. This chain is 3-alpha-(or 20-beta)-hydroxysteroid dehydrogenase, found in Streptomyces exfoliatus (Streptomyces hydrogenans).